We begin with the raw amino-acid sequence, 561 residues long: MACPF domain-containing protein CAD1 (561 aa).

Positions 11-314 (VPSSEALTTT…PPIEDLQYFL (304 aa)) constitute an MACPF domain. Residues 489 to 514 (VASSGRLEPGGPSTSSSTEEVSGQSG) form a disordered region. Residues 500–513 (PSTSSSTEEVSGQS) show a composition bias toward polar residues.

Belongs to the complement C6/C7/C8/C9 (TC 1.C.39) family. As to expression, mainly expressed in the vascular system.

In terms of biological role, negatively controls the salicylic acid (SA)-mediated pathway of programmed cell death in plant immunity. This is MACPF domain-containing protein CAD1 (CAD1) from Arabidopsis thaliana (Mouse-ear cress).